The primary structure comprises 198 residues: Penicillin-binding protein activator LpoB (198 aa).

Positions 1–20 are cleaved as a signal peptide; it reads MSWIRIRRSGVLLLALVLSG. A lipid anchor (N-palmitoyl cysteine) is attached at Cys21. Cys21 carries the S-diacylglycerol cysteine lipid modification. The interval 28-62 is disordered; sequence PQPAAPVEPVTPPVNVPQPPKAEPGQNVPPPPKMQ. Pro residues predominate over residues 30–61; sequence PAAPVEPVTPPVNVPQPPKAEPGQNVPPPPKM.

Belongs to the LpoB family. As to quaternary structure, interacts with PBP1b.

It is found in the cell outer membrane. Functionally, regulator of peptidoglycan synthesis that is essential for the function of penicillin-binding protein 1B (PBP1b). This Erwinia amylovora (strain CFBP1430) protein is Penicillin-binding protein activator LpoB.